The following is a 403-amino-acid chain: MEEERGSALAAESALEKNVAELTVMDVYDIASLVGHEFERVIDQHGCEAIARLMPKVVRVLEILEVLVSRHHVAPELDELRLELDRLRLERMDRIEKERKHQKELELVEDVWRGEAQDLLSQIAQLQEENKQLMTNLSHKDVNFSEEEFQKHEGMSERERQVMKKLKEVVDKQRDEIRAKDRELGLKNEDVEALQQQQTRLMKINHDLRHRVTVVEAQGKALIEQKVELEADLQTKEQEMGSLRAELGKLRERLQGEHSQNGEEEPETEPVGEESISDAEKVAMDLKDPNRPRFTLQELRDVLHERNELKSKVFLLQEELAYYKSEEMEEENRIPQPPPIAHPRTSPQPESGIKRLFSFFSRDKKRLANTQRNVHIQESFGQWANTHRDDGYTEQGQEALQHL.

A Phosphoserine modification is found at serine 7. One can recognise an RH1 domain in the interval 10-97 (AAESALEKNV…RLERMDRIEK (88 aa)). Cysteine 47 is subject to S-nitrosocysteine. A coiled-coil region spans residues 76 to 258 (ELDELRLELD…KLRERLQGEH (183 aa)). 3 disordered regions span residues 254 to 275 (LQGE…GEES), 327 to 352 (EMEE…PESG), and 384 to 403 (ANTH…LQHL). At serine 259 the chain carries Phosphoserine. Residues 262-275 (GEEEPETEPVGEES) are compositionally biased toward acidic residues. The RH2 domain maps to 291-356 (RPRFTLQELR…PQPESGIKRL (66 aa)). Residues 394 to 403 (EQGQEALQHL) are compositionally biased toward polar residues.

The protein belongs to the RILPL family. In terms of assembly, interacts (when S-nitrosylated) with GAPDH. Interacts with RAB8A; interaction is dependent on the phosphorylation of 'Thr-72' of RAB8A. Interacts with RAB10 and RAB12; the interaction is dependent on the phosphorylation of 'Thr-73' of RAB10, and 'Ser-105' of RAB12. In terms of processing, S-nitrosylation is required for the interaction with GAPDH. In terms of tissue distribution, widely expressed. Expressed at lower level in liver and kidney.

The protein localises to the cytoplasm. The protein resides in the cytosol. Its subcellular location is the cytoskeleton. It localises to the microtubule organizing center. It is found in the centrosome. The protein localises to the centriole. The protein resides in the cilium basal body. Functionally, plays a role in the regulation of cell shape and polarity. Plays a role in cellular protein transport, including protein transport away from primary cilia. Neuroprotective protein, which acts by sequestring GAPDH in the cytosol and prevent the apoptotic function of GAPDH in the nucleus. Competes with SIAH1 for binding GAPDH. Does not regulate lysosomal morphology and distribution. Binds to RAB10 following LRRK2-mediated RAB10 phosphorylation which leads to inhibition of ciliogenesis. The protein is RILP-like protein 1 (RILPL1) of Homo sapiens (Human).